A 518-amino-acid chain; its full sequence is WEB family protein At2g40480 (518 aa).

Coiled-coil stretches lie at residues 95–141 (DIKR…LQQE) and 188–219 (DNLV…AKLT). Residues 303–337 (NGESQDDDSEFCFPEPPRSPVTPRGLRIDNDFSTD) form a disordered region. Residues 328–337 (LRIDNDFSTD) show a composition bias toward basic and acidic residues. Residues 344 to 375 (ILKKLEEATEGVKQSKQALEAALNRVEIANVK) adopt a coiled-coil conformation.

The protein belongs to the WEB family.

This is WEB family protein At2g40480 from Arabidopsis thaliana (Mouse-ear cress).